Consider the following 327-residue polypeptide: Fumigatonoid B endoperoxide isomerase nvfE (327 aa).

Positions 1-22 (MGRDQVSHKRSQNSNVSEIPDL) are disordered. 3 residues coordinate Fe cation: His152, Asp154, and His234.

The protein belongs to the PhyH family. In terms of assembly, homodimer. The cofactor is Fe cation.

It catalyses the reaction fumigatonoid B = fumigatonoid C. It participates in secondary metabolite biosynthesis; terpenoid biosynthesis. Functionally, fumigatonoid B endoperoxide isomerase; part of the gene cluster that mediates the biosynthesis of novofumigatonin, a heavily oxygenated meroterpenoid containing a unique orthoester moiety. The first step of the pathway is the synthesis of 3,5-dimethylorsellinic acid (DMOA) by the polyketide synthase nvfA via condensation of one acetyl-CoA starter unit with 3 malonyl-CoA units and 2 methylations. DMOA is then converted to farnesyl-DMOA by the farnesyltransferase nvfB. Epoxydation by FAD-dependent monooxygenase nvfK, followed by a protonation-initiated cyclization catalyzed by the terpene cyclase nvfL leads to the production of asnavolin H. The short chain dehydrogenase nvfC then as a 3-OH dehydrogenase of asnovolin H to yield chemesin D. There are two branches to synthesize asnovolin A from chemesin D. In one branch, chemesin D undergoes Baeyer-Villiger oxidation by nvfH, methylation by nvfJ, and enoyl reduction by the nvfM D enoylreductase that reduces the double bond between C-5'and C-6', to form respectively asnovolin I, asnovolin K, and asnovolin A. In the other branch, the methylation precedes the Baeyer-Villiger oxidation and the enoyl reduction to yield asnovolin A via the asnovolin J intermediate. Asnovolin A is further converted to fumigatonoid A by the Fe(II)/2-oxoglutarate-dependent dioxygenase nvfI that catalyzes an endoperoxidation reaction. The alpha/beta hydrolase nvfD then acts as an epimerase that converts fumigatonoid A to its C-5' epimer, which then undergoes spontaneous or nvfD-catalyzed lactonization. The following step utilizes the ketoreductase nvfG to produce fumigatonoid B. The dioxygenase nvfE further converts fumigatonoid B into fumigatonoid C. Finally the Fe(II)/2-oxoglutarate-dependent dioxygenase nvfF catalyzes two rounds of oxidation to transform fumigatonoid C into the end product, novofumigatonin A. This is Fumigatonoid B endoperoxide isomerase nvfE from Aspergillus novofumigatus (strain IBT 16806).